The chain runs to 123 residues: Small ribosomal subunit protein uS12 (123 aa).

3-methylthioaspartic acid is present on D89. A disordered region spans residues 104–123 (TAGVKDRKQARSKYGAKRPK). Over residues 113–123 (ARSKYGAKRPK) the composition is skewed to basic residues.

Belongs to the universal ribosomal protein uS12 family. In terms of assembly, part of the 30S ribosomal subunit. Contacts proteins S8 and S17. May interact with IF1 in the 30S initiation complex.

With S4 and S5 plays an important role in translational accuracy. Functionally, interacts with and stabilizes bases of the 16S rRNA that are involved in tRNA selection in the A site and with the mRNA backbone. Located at the interface of the 30S and 50S subunits, it traverses the body of the 30S subunit contacting proteins on the other side and probably holding the rRNA structure together. The combined cluster of proteins S8, S12 and S17 appears to hold together the shoulder and platform of the 30S subunit. The chain is Small ribosomal subunit protein uS12 from Chromobacterium violaceum (strain ATCC 12472 / DSM 30191 / JCM 1249 / CCUG 213 / NBRC 12614 / NCIMB 9131 / NCTC 9757 / MK).